A 477-amino-acid polypeptide reads, in one-letter code: Ribulose bisphosphate carboxylase large chain (477 aa).

Positions 1 to 2 (MS) are excised as a propeptide. The residue at position 3 (Pro-3) is an N-acetylproline. An N6,N6,N6-trimethyllysine modification is found at Lys-14. Residues Asn-123 and Thr-173 each contribute to the substrate site. The Proton acceptor role is filled by Lys-175. Lys-177 contacts substrate. Residues Lys-201, Asp-203, and Glu-204 each coordinate Mg(2+). An N6-carboxylysine modification is found at Lys-201. His-294 (proton acceptor) is an active-site residue. Substrate contacts are provided by Arg-295, His-327, and Ser-379.

The protein belongs to the RuBisCO large chain family. Type I subfamily. Heterohexadecamer of 8 large chains and 8 small chains; disulfide-linked. The disulfide link is formed within the large subunit homodimers. Mg(2+) is required as a cofactor. The disulfide bond which can form in the large chain dimeric partners within the hexadecamer appears to be associated with oxidative stress and protein turnover.

Its subcellular location is the plastid. It carries out the reaction 2 (2R)-3-phosphoglycerate + 2 H(+) = D-ribulose 1,5-bisphosphate + CO2 + H2O. It catalyses the reaction D-ribulose 1,5-bisphosphate + O2 = 2-phosphoglycolate + (2R)-3-phosphoglycerate + 2 H(+). Its function is as follows. RuBisCO catalyzes two reactions: the carboxylation of D-ribulose 1,5-bisphosphate, the primary event in carbon dioxide fixation, as well as the oxidative fragmentation of the pentose substrate in the photorespiration process. Both reactions occur simultaneously and in competition at the same active site. This chain is Ribulose bisphosphate carboxylase large chain (rbcL), found in Lathraea clandestina (Purple toothwort).